The primary structure comprises 476 residues: Glutamate--tRNA ligase (476 aa).

Positions 9–19 (PSPTGTLHIGT) match the 'HIGH' region motif. Positions 248-252 (KLSKR) match the 'KMSKS' region motif. An ATP-binding site is contributed by K251.

The protein belongs to the class-I aminoacyl-tRNA synthetase family. Glutamate--tRNA ligase type 1 subfamily. In terms of assembly, monomer.

The protein localises to the cytoplasm. The catalysed reaction is tRNA(Glu) + L-glutamate + ATP = L-glutamyl-tRNA(Glu) + AMP + diphosphate. Its function is as follows. Catalyzes the attachment of glutamate to tRNA(Glu) in a two-step reaction: glutamate is first activated by ATP to form Glu-AMP and then transferred to the acceptor end of tRNA(Glu). The sequence is that of Glutamate--tRNA ligase from Prochlorococcus marinus (strain MIT 9303).